The sequence spans 568 residues: MKILVASAWPYVQSVPHLGNLIGSILSADVFARYARLKYGKENVVFVSGSDEHGTPIEIEAIKRGVSPKSLTDQAHEYDRQLFLNTWNISFDNYTRTESEVHKSFVKEFLLGVSKYIKVEEEELPYCERDKLFLPDRFVKGTCPYCGFEDARGDQCDRCGRLLTPSLLINPKCAICGTPPVLRKTKHWFFDLRPFSEPIREWITSSQDMPENVKGTALSWVNEGLKPRSLTRDNSWGIPAPFPGAEGKTIYVWFEALLGYLSATLEYFQGRGETERWKEFWENGKVRSYYFIGKDNIPFHAVILPAMLLASEKNYALPTVIAATEYLMYEGQKFSKSRKIGIWIDEAPLIMEVDYWRFLLIRMRPEEKDMNFTWTEAIRIVNSELNDDVGNLVNRVITMVNRYFQGKIPEPKNLKEVDMRLLSRVGETLDQVSFMFEKGKLKGGTELVLTLARETNAYLNEKAPWDKVKSDVEDASNTLFVASSAIRAIALMLYPVIPEKAKLIYDQLGLDITQERWDNAKEPLKPGHVVGKPAPVFKKLPQDFEKNLNEILEKVRKEVEKRRPTLLK.

The 'HIGH' region motif lies at 10–20; that stretch reads PYVQSVPHLGN. 4 residues coordinate Zn(2+): Cys-143, Cys-146, Cys-156, and Cys-159. The short motif at 333–337 is the 'KMSKS' region element; it reads KFSKS. Residue Lys-336 participates in ATP binding.

Belongs to the class-I aminoacyl-tRNA synthetase family. MetG type 1 subfamily. Zn(2+) is required as a cofactor.

It is found in the cytoplasm. It carries out the reaction tRNA(Met) + L-methionine + ATP = L-methionyl-tRNA(Met) + AMP + diphosphate. In terms of biological role, is required not only for elongation of protein synthesis but also for the initiation of all mRNA translation through initiator tRNA(fMet) aminoacylation. The chain is Methionine--tRNA ligase from Metallosphaera sedula (strain ATCC 51363 / DSM 5348 / JCM 9185 / NBRC 15509 / TH2).